Consider the following 150-residue polypeptide: UPF0179 protein Mbur_1033 (150 aa).

Belongs to the UPF0179 family.

The protein is UPF0179 protein Mbur_1033 of Methanococcoides burtonii (strain DSM 6242 / NBRC 107633 / OCM 468 / ACE-M).